A 903-amino-acid chain; its full sequence is Cell division cycle protein 48 homolog MJ1156 (903 aa).

Residues 220 to 227 (GPPGTGKT) and 493 to 500 (GPPGTGKT) each bind ATP.

Belongs to the AAA ATPase family. CDC48 subfamily.

This chain is Cell division cycle protein 48 homolog MJ1156, found in Methanocaldococcus jannaschii (strain ATCC 43067 / DSM 2661 / JAL-1 / JCM 10045 / NBRC 100440) (Methanococcus jannaschii).